The following is a 479-amino-acid chain: Fibrinogen beta chain (479 aa).

The signal sequence occupies residues 1 to 18 (MRHLWLLLLSVSLVQTQA). Residues 20 to 82 (TTDSDKVDLS…VERKPPDAGG (63 aa)) form a disordered region. Residues 33-35 (GHR) form a beta-chain polymerization, binding distal domain of another fibrin region. Composition is skewed to basic and acidic residues over residues 35–45 (RPVDRRKEEPP) and 64–78 (AKVD…RKPP). Disulfide bonds link Cys-219-Cys-304 and Cys-229-Cys-258. The region spanning 220–476 (NIPVVSGKEC…RMSMKIRPVF (257 aa)) is the Fibrinogen C-terminal domain. Asn-382 carries N-linked (GlcNAc...) asparagine glycosylation. An intrachain disulfide couples Cys-412 to Cys-425.

Heterohexamer; disulfide linked. Contains 2 sets of 3 non-identical chains (alpha, beta and gamma). The 2 heterotrimers are in head to head conformation with the N-termini in a small central domain. In terms of processing, conversion of fibrinogen to fibrin is triggered by thrombin, which cleaves fibrinopeptides A and B from alpha and beta chains, and thus exposes the N-terminal polymerization sites responsible for the formation of the soft clot.

It localises to the secreted. Cleaved by the protease thrombin to yield monomers which, together with fibrinogen alpha (FGA) and fibrinogen gamma (FGG), polymerize to form an insoluble fibrin matrix. Fibrin has a major function in hemostasis as one of the primary components of blood clots. In addition, functions during the early stages of wound repair to stabilize the lesion and guide cell migration during re-epithelialization. Was originally thought to be essential for platelet aggregation, based on in vitro studies using anticoagulated blood. However subsequent studies have shown that it is not absolutely required for thrombus formation in vivo. Enhances expression of SELP in activated platelets. Maternal fibrinogen is essential for successful pregnancy. Fibrin deposition is also associated with infection, where it protects against IFNG-mediated hemorrhage. May also facilitate the antibacterial immune response via both innate and T-cell mediated pathways. The polypeptide is Fibrinogen beta chain (Fgb) (Rattus norvegicus (Rat)).